The primary structure comprises 554 residues: Glucose-6-phosphate isomerase (554 aa).

Catalysis depends on Glu-359, which acts as the Proton donor. Active-site residues include His-390 and Lys-518.

The protein belongs to the GPI family.

The protein localises to the cytoplasm. The enzyme catalyses alpha-D-glucose 6-phosphate = beta-D-fructose 6-phosphate. It functions in the pathway carbohydrate biosynthesis; gluconeogenesis. Its pathway is carbohydrate degradation; glycolysis; D-glyceraldehyde 3-phosphate and glycerone phosphate from D-glucose: step 2/4. Functionally, catalyzes the reversible isomerization of glucose-6-phosphate to fructose-6-phosphate. The chain is Glucose-6-phosphate isomerase from Pseudomonas fluorescens.